The primary structure comprises 85 residues: Large ribosomal subunit protein bL31B (85 aa).

It belongs to the bacterial ribosomal protein bL31 family. Type B subfamily. Part of the 50S ribosomal subunit.

This chain is Large ribosomal subunit protein bL31B, found in Staphylococcus saprophyticus subsp. saprophyticus (strain ATCC 15305 / DSM 20229 / NCIMB 8711 / NCTC 7292 / S-41).